The following is a 212-amino-acid chain: Ropporin-1 (212 aa).

One can recognise an RIIa domain in the interval 12–43 (PELPELLKQFTKDAIRTQPPDLIQWAAEYFGA). Position 56 is a phosphoserine (S56). The tract at residues 209–212 (VRLE) is interaction with RHPN1.

Belongs to the ropporin family. As to quaternary structure, homodimer. Interacts with AKAP3. May interact with SPA17. Interacts with RHPN1. Interacts with FSCB; the interaction increases upon spermatozoa capacitation conditions. Interacts with CFAP61. Post-translationally, sumoylated, sumoylation decreases upon spermatozoa capacitation conditions. As to expression, testis-specific. Present in the most inner parts of seminiferous tubules (at protein level).

It is found in the cell projection. The protein localises to the cilium. The protein resides in the flagellum. In terms of biological role, important for male fertility. With ROPN1L, involved in fibrous sheath integrity and sperm motility, plays a role in PKA-dependent signaling processes required for spermatozoa capacitation. This chain is Ropporin-1 (Ropn1), found in Mus musculus (Mouse).